The following is a 272-amino-acid chain: Diaminopimelate epimerase (272 aa).

Substrate-binding residues include asparagine 11 and asparagine 60. The Proton donor role is filled by cysteine 69. Substrate contacts are provided by residues 70–71 (GN), asparagine 181, and 199–200 (ER). Cysteine 209 serves as the catalytic Proton acceptor. 210–211 (GT) is a substrate binding site.

It belongs to the diaminopimelate epimerase family. Homodimer.

It localises to the cytoplasm. It carries out the reaction (2S,6S)-2,6-diaminopimelate = meso-2,6-diaminopimelate. It participates in amino-acid biosynthesis; L-lysine biosynthesis via DAP pathway; DL-2,6-diaminopimelate from LL-2,6-diaminopimelate: step 1/1. In terms of biological role, catalyzes the stereoinversion of LL-2,6-diaminopimelate (L,L-DAP) to meso-diaminopimelate (meso-DAP), a precursor of L-lysine and an essential component of the bacterial peptidoglycan. In Helicobacter pylori (strain P12), this protein is Diaminopimelate epimerase.